We begin with the raw amino-acid sequence, 425 residues long: Amidase 1 (425 aa).

N-acetylalanine is present on A2. Residues K36 and S113 each act as charge relay system in the active site. S137 serves as the catalytic Acyl-ester intermediate.

The protein belongs to the amidase family. Expressed in cotyledons, leaves and flower buds. Lower levels in roots, stems and siliques.

The protein resides in the cytoplasm. Its subcellular location is the nucleus. It is found in the nucleoplasm. It catalyses the reaction a monocarboxylic acid amide + H2O = a monocarboxylate + NH4(+). It carries out the reaction indole-3-acetamide + H2O = (indol-3-yl)acetate + NH4(+). The catalysed reaction is 2-phenylacetamide + H2O = 2-phenylacetate + NH4(+). The enzyme catalyses L-asparagine + H2O = L-aspartate + NH4(+). It catalyses the reaction 1-naphthaleneacetamide + H2O = 1-naphthaleneacetate + NH4(+). Inhibited by phenylmethylsulfonyl fluoride (PMSF). Its function is as follows. Amidase involved in auxin biosynthesis. Converts indole-3-acetamide to indole-3-acetate. Converts phenyl-2-acetamide (PAM) to phenyl-2-acetate. Substrate preference is PAM &gt; IAM. Can also use L-asparagine and 1-naphtalene-acetamide as substrates, but not indole-3-acetonitrile or indole-3-acetyl-L-aspartic acid. The polypeptide is Amidase 1 (Arabidopsis thaliana (Mouse-ear cress)).